The sequence spans 193 residues: Putative nucleotidase YqfW (193 aa).

This sequence belongs to the 5'(3')-deoxyribonucleotidase family.

The sequence is that of Putative nucleotidase YqfW (yqfW) from Bacillus subtilis (strain 168).